Consider the following 294-residue polypeptide: 1,4-dihydroxy-2-naphthoate octaprenyltransferase (294 aa).

The next 6 membrane-spanning stretches (helical) occupy residues 35 to 55 (SAVW…VIGV), 103 to 123 (AGLA…ATCI), 140 to 160 (GFGE…GTEY), 166 to 186 (VDWV…SVLV), 220 to 240 (LLVA…WCAV), and 272 to 292 (GLAM…AGSV).

Belongs to the MenA family. Type 1 subfamily.

Its subcellular location is the cell membrane. It catalyses the reaction an all-trans-polyprenyl diphosphate + 1,4-dihydroxy-2-naphthoate + H(+) = a 2-demethylmenaquinol + CO2 + diphosphate. It functions in the pathway quinol/quinone metabolism; menaquinone biosynthesis; menaquinol from 1,4-dihydroxy-2-naphthoate: step 1/2. Conversion of 1,4-dihydroxy-2-naphthoate (DHNA) to demethylmenaquinone (DMK). In Mycobacterium leprae (strain TN), this protein is 1,4-dihydroxy-2-naphthoate octaprenyltransferase.